Consider the following 898-residue polypeptide: Putative aconitate hydratase, cytoplasmic (898 aa).

Residues glutamine 90 and 209 to 211 (DSH) each bind substrate. Positions 441, 507, and 510 each coordinate [4Fe-4S] cluster. Substrate contacts are provided by residues arginine 540, arginine 545, arginine 703, and 784-785 (SR).

This sequence belongs to the aconitase/IPM isomerase family. Requires [4Fe-4S] cluster as cofactor.

It is found in the cytoplasm. It carries out the reaction citrate = D-threo-isocitrate. It functions in the pathway carbohydrate metabolism; glyoxylate and dicarboxylate metabolism. Catalyzes the isomerization of citrate to isocitrate via cis-aconitate. This chain is Putative aconitate hydratase, cytoplasmic, found in Oryza sativa subsp. japonica (Rice).